Reading from the N-terminus, the 722-residue chain is Threonine--tRNA ligase 1, cytoplasmic (722 aa).

Polar residues predominate over residues 1 to 10; the sequence is MSQEKASSPS. The interval 1 to 48 is disordered; it reads MSQEKASSPSGKMDGEKPVDASEEKRKEGGKKKSKDGGGDGGRAELNP. Residues 13-27 are compositionally biased toward basic and acidic residues; it reads MDGEKPVDASEEKRK. One can recognise a TGS domain in the interval 78-142; sequence DSKPIKVTLP…ETDCTLELLK (65 aa). N6-acetyllysine is present on K242. At T245 the chain carries Phosphothreonine. Y297 bears the Phosphotyrosine mark. The residue at position 452 (T452) is a Phosphothreonine.

Belongs to the class-II aminoacyl-tRNA synthetase family. Homodimer. ISGylated.

The protein localises to the cytoplasm. The enzyme catalyses tRNA(Thr) + L-threonine + ATP = L-threonyl-tRNA(Thr) + AMP + diphosphate + H(+). Catalyzes the attachment of threonine to tRNA(Thr) in a two-step reaction: threonine is first activated by ATP to form Thr-AMP and then transferred to the acceptor end of tRNA(Thr). Also edits incorrectly charged tRNA(Thr) via its editing domain, at the post-transfer stage. The chain is Threonine--tRNA ligase 1, cytoplasmic (Tars1) from Mus musculus (Mouse).